A 259-amino-acid polypeptide reads, in one-letter code: Thiazole synthase (259 aa).

Lys95 functions as the Schiff-base intermediate with DXP in the catalytic mechanism. 1-deoxy-D-xylulose 5-phosphate-binding positions include Gly156, 182-183, and 204-205; these read AG and NT.

Belongs to the ThiG family. Homotetramer. Forms heterodimers with either ThiH or ThiS.

It localises to the cytoplasm. It carries out the reaction [ThiS sulfur-carrier protein]-C-terminal-Gly-aminoethanethioate + 2-iminoacetate + 1-deoxy-D-xylulose 5-phosphate = [ThiS sulfur-carrier protein]-C-terminal Gly-Gly + 2-[(2R,5Z)-2-carboxy-4-methylthiazol-5(2H)-ylidene]ethyl phosphate + 2 H2O + H(+). Its pathway is cofactor biosynthesis; thiamine diphosphate biosynthesis. Its function is as follows. Catalyzes the rearrangement of 1-deoxy-D-xylulose 5-phosphate (DXP) to produce the thiazole phosphate moiety of thiamine. Sulfur is provided by the thiocarboxylate moiety of the carrier protein ThiS. In vitro, sulfur can be provided by H(2)S. The sequence is that of Thiazole synthase from Serratia proteamaculans (strain 568).